Reading from the N-terminus, the 220-residue chain is MSCGTYKRGSLTFLLVVALAVPVFCQSRTRLKWKTRISTTPEVMVEERALVRNETNNRYVKIYSTRHPKKTAISNATSTIDFEKRKVAIKVRTYVNSQRTEACYLMDPINTHDMTMTVNVIKSRNQTQVIDKTAVMDMVVNSNKLTIDDLKKDYELSRIYKECDKAVVESGLYTIIKGTPSASATSTDPPIDVLGLIPQSGIHSQHIRIHFNTNPQTAPV.

The signal sequence occupies residues 1–25; that stretch reads MSCGTYKRGSLTFLLVVALAVPVFC.

As to expression, nacreous layer of shell (at protein level). Expressed primarily in the mantle with highest level in the mantle pallium and lower level in the mantle edge.

It is found in the secreted. This is an uncharacterized protein from Margaritifera margaritifera (Freshwater pearl mussel).